Reading from the N-terminus, the 492-residue chain is Catalase (492 aa).

Catalysis depends on residues H65 and N138. Y348 is a heme binding site.

It belongs to the catalase family. Homotetramer. It depends on heme as a cofactor.

The protein resides in the cytoplasm. The protein localises to the cytosol. It is found in the peroxisome matrix. It carries out the reaction 2 H2O2 = O2 + 2 H2O. In terms of biological role, catalyzes the degradation of hydrogen peroxide (H(2)O(2)) generated by peroxisomal oxidases to water and oxygen, thereby protecting cells from the toxic effects of hydrogen peroxide. The protein is Catalase of Helianthus annuus (Common sunflower).